The following is a 674-amino-acid chain: ATP-dependent DNA helicase Hel308 (674 aa).

Residues Q27 and 44–51 (VPTAAGKT) contribute to the ATP site. One can recognise a Helicase ATP-binding domain in the interval 31–197 (IEQIRKGRNV…WLDASLIKSD (167 aa)). The DEAH box motif lies at 142–145 (DEIH). The 188-residue stretch at 224–411 (SINQIIRETV…EAKVRFNTLA (188 aa)) folds into the Helicase C-terminal domain.

Belongs to the helicase family. Hel308 subfamily. Monomer.

The catalysed reaction is Couples ATP hydrolysis with the unwinding of duplex DNA by translocating in the 3'-5' direction.. It carries out the reaction ATP + H2O = ADP + phosphate + H(+). Its function is as follows. DNA-dependent ATPase and 3'-5' DNA helicase that may be involved in repair of stalled replication forks. This chain is ATP-dependent DNA helicase Hel308, found in Thermoplasma acidophilum (strain ATCC 25905 / DSM 1728 / JCM 9062 / NBRC 15155 / AMRC-C165).